Here is a 414-residue protein sequence, read N- to C-terminus: MSDTLASPSPETASGIPDYPMSRSAGCPFAPPPGVMALAAAKPLTRVRIWDGSTPWLITGYEQVRELFSDSRVSVDDRLPGFPHWNAGMLSTVHKRPRSVFTADGEEHTRFRRMLSKPFTFKRVEALRPTIQQITDEHIDAMLAGPQPADLVAKLALPVPSLVISQLLGVPYEDAEMFQHHANVGLARYATGADTVKGAMSLHKYLAELVEAKMANPAEDAVSDLAERVKAGELSVKEAAQLGTGLLIAGHETTANMIGLGVLALLVNPDQAGILRDAQDPKIVANAVEELLRYLSIIQNGQRRVAHEDIHIGGETIRAGEGIIIDLAPANWDAHAFTEPDRLYLHRAGAERNVAFGYGRHQCVGQQLARAELQIVYRTLLQRIPTLTLATALEDVPFKDDRLAYGVYELPVTW.

A compositionally biased stretch (polar residues) spans 1–12 (MSDTLASPSPET). A disordered region spans residues 1–21 (MSDTLASPSPETASGIPDYPM). Heme contacts are provided by H108, Q302, R304, H361, and C363.

It belongs to the cytochrome P450 family. Heme serves as cofactor.

Can bind oleic-acid derivatives, amphotericin B like precursors and a variety of nitrogen ligand donors. The protein is Cytochrome P450 CYP105Q4 of Mycobacterium marinum (strain ATCC BAA-535 / M).